Here is a 421-residue protein sequence, read N- to C-terminus: Type II methyltransferase M.SfiI (421 aa).

It belongs to the N(4)/N(6)-methyltransferase family. N(4) subfamily.

It catalyses the reaction a 2'-deoxycytidine in DNA + S-adenosyl-L-methionine = an N(4)-methyl-2'-deoxycytidine in DNA + S-adenosyl-L-homocysteine + H(+). A beta subtype methylase, recognizes the double-stranded sequence 5'-GGCCNNNNNGGCC-3', methylates C-? on both strands, and protects the DNA from cleavage by the SfiI endonuclease. This is Type II methyltransferase M.SfiI from Streptomyces fimbriatus.